Here is a 394-residue protein sequence, read N- to C-terminus: S-adenosylmethionine synthase (394 aa).

His16 lines the ATP pocket. Mg(2+) is bound at residue Asp18. Position 44 (Glu44) interacts with K(+). 2 residues coordinate L-methionine: Glu57 and Gln100. The segment at 100–110 is flexible loop; that stretch reads QSPDIAQGVDA. ATP is bound by residues 172–174, 239–240, Asp248, 254–255, Ala271, and Lys275; these read DAK, RF, and RK. L-methionine is bound at residue Asp248. Position 279 (Lys279) interacts with L-methionine.

It belongs to the AdoMet synthase family. As to quaternary structure, homotetramer; dimer of dimers. It depends on Mg(2+) as a cofactor. Requires K(+) as cofactor.

Its subcellular location is the cytoplasm. The catalysed reaction is L-methionine + ATP + H2O = S-adenosyl-L-methionine + phosphate + diphosphate. It participates in amino-acid biosynthesis; S-adenosyl-L-methionine biosynthesis; S-adenosyl-L-methionine from L-methionine: step 1/1. In terms of biological role, catalyzes the formation of S-adenosylmethionine (AdoMet) from methionine and ATP. The overall synthetic reaction is composed of two sequential steps, AdoMet formation and the subsequent tripolyphosphate hydrolysis which occurs prior to release of AdoMet from the enzyme. This Enterococcus faecalis (strain ATCC 700802 / V583) protein is S-adenosylmethionine synthase.